The primary structure comprises 701 residues: Polyribonucleotide nucleotidyltransferase (701 aa).

Residues Asp-480 and Asp-486 each coordinate Mg(2+). One can recognise a KH domain in the interval 547–606; that stretch reads PKIDTIKIDVDKIKVVIGKGGETIDKIIAETGVKIDIDDEGNVSIYSSDQAAINRTKEII. Positions 616 to 684 constitute an S1 motif domain; sequence GEVYHAKVVR…EKGRVDASMK (69 aa). The segment at 682–701 is disordered; that stretch reads SMKALIPRPPKPEKKEEKHD. A compositionally biased stretch (basic and acidic residues) spans 691 to 701; it reads PKPEKKEEKHD.

It belongs to the polyribonucleotide nucleotidyltransferase family. Requires Mg(2+) as cofactor.

The protein resides in the cytoplasm. It carries out the reaction RNA(n+1) + phosphate = RNA(n) + a ribonucleoside 5'-diphosphate. Involved in mRNA degradation. Catalyzes the phosphorolysis of single-stranded polyribonucleotides processively in the 3'- to 5'-direction. This Streptococcus pyogenes serotype M12 (strain MGAS2096) protein is Polyribonucleotide nucleotidyltransferase.